Consider the following 388-residue polypeptide: GTPase Obg (388 aa).

The Obg domain occupies methionine 1 to leucine 159. Residues alanine 160–glutamine 333 form the OBG-type G domain. GTP-binding positions include glycine 166 to serine 173, phenylalanine 191 to valine 195, aspartate 213 to glycine 216, asparagine 283 to aspartate 286, and serine 314 to tyrosine 316. Mg(2+)-binding residues include serine 173 and threonine 193.

The protein belongs to the TRAFAC class OBG-HflX-like GTPase superfamily. OBG GTPase family. As to quaternary structure, monomer. The cofactor is Mg(2+).

The protein localises to the cytoplasm. Functionally, an essential GTPase which binds GTP, GDP and possibly (p)ppGpp with moderate affinity, with high nucleotide exchange rates and a fairly low GTP hydrolysis rate. Plays a role in control of the cell cycle, stress response, ribosome biogenesis and in those bacteria that undergo differentiation, in morphogenesis control. The protein is GTPase Obg of Shewanella sp. (strain MR-4).